We begin with the raw amino-acid sequence, 589 residues long: uncharacterized protein (589 aa).

Disordered stretches follow at residues 328–365, 379–459, 525–555, and 569–589; these read LSSTSDASAAPAGVAGGGKARQMQFSQGGSGQGAEDGP, SLLG…DPSN, RSTSRLDAGEGQGDDDDEEDGQAEKYEGAVK, and VRGTKVVVQPSPPGDDSSRDM. Residues 398 to 425 show a composition bias toward polar residues; the sequence is VSLSSASTSARPTQRRSSLTPCSQTPQE. The segment covering 426-445 has biased composition (basic and acidic residues); the sequence is THQHAREALTTRMESQREAN. Positions 536-545 are enriched in acidic residues; that stretch reads QGDDDDEEDG.

This is an uncharacterized protein from Mycosarcoma maydis (Corn smut fungus).